The primary structure comprises 667 residues: Long-chain-fatty-acid--CoA ligase ACSBG2 (667 aa).

A compositionally biased stretch (basic and acidic residues) spans 1–14; the sequence is MTQEKKAEDPDRGM. The interval 1 to 20 is disordered; the sequence is MTQEKKAEDPDRGMDTTSAA. ATP is bound by residues 227–235, 418–423, Asp496, Arg511, and Arg624; these read TSGTTGSPK and EIYGMT.

The protein belongs to the ATP-dependent AMP-binding enzyme family. Bubblegum subfamily.

Its subcellular location is the cytoplasm. It localises to the membrane. It carries out the reaction a long-chain fatty acid + ATP + CoA = a long-chain fatty acyl-CoA + AMP + diphosphate. It catalyses the reaction (5Z,8Z,11Z,14Z)-eicosatetraenoate + ATP + CoA = (5Z,8Z,11Z,14Z)-eicosatetraenoyl-CoA + AMP + diphosphate. The enzyme catalyses hexadecanoate + ATP + CoA = hexadecanoyl-CoA + AMP + diphosphate. The catalysed reaction is (9Z)-octadecenoate + ATP + CoA = (9Z)-octadecenoyl-CoA + AMP + diphosphate. It carries out the reaction (9Z,12Z)-octadecadienoate + ATP + CoA = (9Z,12Z)-octadecadienoyl-CoA + AMP + diphosphate. It catalyses the reaction tetracosanoate + ATP + CoA = tetracosanoyl-CoA + AMP + diphosphate. Its function is as follows. Catalyzes the conversion of fatty acids such as long chain and very long-chain fatty acids to their active form acyl-CoAs for both synthesis of cellular lipids, and degradation via beta-oxidation. Can activate diverse saturated, monosaturated and polyunsaturated fatty acids. Has increased ability to activate oleic and linoleic acid. May play a role in spermatogenesis. This Rattus norvegicus (Rat) protein is Long-chain-fatty-acid--CoA ligase ACSBG2.